The chain runs to 268 residues: Proenkephalin-A (268 aa).

The N-terminal stretch at methionine 1–alanine 24 is a signal peptide. 3 disulfides stabilise this stretch: cysteine 26-cysteine 48, cysteine 30-cysteine 52, and cysteine 33-cysteine 65. Residues glycine 162–lysine 185 form a disordered region. A compositionally biased stretch (basic and acidic residues) spans asparagine 166 to serine 176. 2 consecutive propeptides follow at residues serine 197–glutamine 208 and valine 218–glutamine 228. Residue serine 252 is modified to Phosphoserine.

It belongs to the opioid neuropeptide precursor family. Post-translationally, proenkephalin-A is cleaved by CTSL to generate Met-enkephalin. Processed and degraded by ACE. In terms of processing, probably cleaved by ACE. Post-translationally, processed by ACE to generate Met-enkephalin in the nucleus accumbens of the brain. The N-terminal domain contains 6 conserved cysteines thought to be involved in disulfide bonding and/or processing.

The protein resides in the cytoplasmic vesicle. It is found in the secretory vesicle. The protein localises to the chromaffin granule lumen. It localises to the secreted. Functionally, neuropeptide that competes with and mimic the effects of opiate drugs. They play a role in a number of physiologic functions, including pain perception and responses to stress. In terms of biological role, met-enkephalin-Arg-Phe neuropeptide acts as a strong ligand of Mu-type opioid receptor OPRM1. Met-enkephalin-Arg-Phe-binding to OPRM1 in the nucleus accumbens of the brain increases activation of OPRM1, leading to long-term synaptic depression of glutamate release. Increases glutamate release in the striatum and decreases GABA concentration in the striatum. Its function is as follows. Increases glutamate release in the striatum. In Mesocricetus auratus (Golden hamster), this protein is Proenkephalin-A (PENK).